A 443-amino-acid chain; its full sequence is Xaa-Pro dipeptidase (443 aa).

Residues Asp-246, Asp-257, His-339, Glu-384, and Glu-423 each contribute to the Mn(2+) site.

The protein belongs to the peptidase M24B family. Bacterial-type prolidase subfamily. The cofactor is Mn(2+).

It carries out the reaction Xaa-L-Pro dipeptide + H2O = an L-alpha-amino acid + L-proline. In terms of biological role, splits dipeptides with a prolyl residue in the C-terminal position. The sequence is that of Xaa-Pro dipeptidase from Klebsiella pneumoniae (strain 342).